The primary structure comprises 793 residues: E3 UFM1-protein ligase 1 (793 aa).

An N-acetylalanine modification is found at Ala-2. The segment at 2–200 is mediates interaction with DDRGK1; sequence ADAWEEIRRL…RGLFSAITRP (199 aa). A required for E3 UFM1-protein ligase activity region spans residues 2–212; the sequence is ADAWEEIRRL…VNSLVSKYGF (211 aa). An involved in CDK5RAP3-binding region spans residues 121-250; the sequence is DQLSEEVNDK…KAVFVPDIYS (130 aa). A mediates interaction with TRIP4 region spans residues 200–400; sequence PTPVNSLVSK…NPVHLITEED (201 aa). The tract at residues 410–473 is disordered; the sequence is VNTSKKDKKD…SSHGGKKKPD (64 aa). Residue Arg-433 is modified to Omega-N-methylarginine. Residues Ser-458 and Ser-462 each carry the phosphoserine modification. The segment at 490 to 683 is mediates interaction with CDK5RAP3; sequence IQDAPEEFIS…QLKVTEDPAL (194 aa). The residue at position 535 (Thr-535) is a Phosphothreonine. Positions 742–765 are disordered; sequence NKKTGQGEDPSSDELDKEQHDVTN. A phosphoserine mark is found at Ser-752 and Ser-753.

It belongs to the UFL1 family. Catalytic component of the UFM1 ribosome E3 ligase (UREL) complex, composed of UFL1, DDRGK1 and CDK5RAP3. Interacts with E2-like enzyme UFC1. Interacts with RELA. Interacts with NBN; promoting recruitment to double-strand breaks following DNA damage. Interacts (when phosphorylated) with YWHAG/14-3-3-gamma; sequestering UFL1 and preventing its association with PDCD1/PD-1 substrate. Ubiquitinated, leading to its degradation by the proteasome. Interaction with CDK5RAP3 protects both proteins against ubiquitination and degradation via the proteasome. In terms of processing, phosphorylated at Ser-462 by ATM, enhancing protein ligase activity and promoting ATM activation in a positive feedback loop. Phosphorylation at Thr-535 by AMPK promotes its interaction with YWHAG/14-3-3-gamma, thereby preventing UFL1 association with PDCD1/PD-1 substrate. Ubiquitously expressed with higher expression in pancreatic islets and other secretory tissues. In the embryonic brain at 17 dpc, detected in Sox2-positive neural stem cells and in Slc1a3/GLAST-positive radial glia. In perinatal brain, highly expressed in Slc1a3-positive Bergmann glia of the cerebellum. Continues to be expressed in Bergmann glia of adult brain at 16 weeks. Expressed in adult heart. Highly expressed in the intestinal exocrine cells.

It localises to the endoplasmic reticulum membrane. Its subcellular location is the cytoplasm. The protein localises to the cytosol. The protein resides in the nucleus. It is found in the chromosome. In terms of biological role, E3 protein ligase that mediates ufmylation, the covalent attachment of the ubiquitin-like modifier UFM1 to lysine residues on target proteins, and which plays a key role in various processes, such as ribosome recycling, response to DNA damage, interferon response or reticulophagy (also called ER-phagy). Catalyzes ufmylation of many protein, such as CD274/PD-L1, CDK5RAP3, CYB5R3, DDRGK1, EIF6, histone H4, MRE11, P4HB, PDCD1/PD-1, TRIP4, RPN1, RPS20/uS10, RPL10/uL16, RPL26/uL24, SYVN1/HRD1 and TP53/p53. As part of the UREL complex, plays a key role in ribosome recycling by catalyzing mono-ufmylation of RPL26/uL24 subunit of the 60S ribosome. Ufmylation of RPL26/uL24 occurs on free 60S ribosomes following ribosome dissociation: it weakens the junction between post-termination 60S subunits and SEC61 translocons, promoting release and recycling of the large ribosomal subunit from the endoplasmic reticulum membrane. Ufmylation of RPL26/uL24 and subsequent 60S ribosome recycling either take place after normal termination of translation or after ribosome stalling during cotranslational translocation at the endoplasmic reticulum. Involved in reticulophagy in response to endoplasmic reticulum stress by mediating ufmylation of proteins such as CYB5R3 and RPN1, thereby promoting lysosomal degradation of ufmylated proteins. Ufmylation in response to endoplasmic reticulum stress is essential for processes such as hematopoiesis, blood vessel morphogenesis or inflammatory response. Mediates ufmylation of DDRGK1 and CDK5RAP3; the role of these modifications is however unclear: as both DDRGK1 and CDK5RAP3 act as substrate adapters for ufmylation, it is uncertain whether ufmylation of these proteins is a collateral effect or is required for ufmylation. Acts as a negative regulator of T-cell activation by mediating ufmylation and stabilization of PDCD1/PD-1. Also involved in the response to DNA damage: recruited to double-strand break sites following DNA damage and mediates monoufmylation of histone H4 and ufmylation of MRE11. Mediates ufmylation of TP53/p53, promoting its stability. Catalyzes ufmylation of TRIP4, thereby playing a role in nuclear receptor-mediated transcription. Required for hematopoietic stem cell function and hematopoiesis. The polypeptide is E3 UFM1-protein ligase 1 (Mus musculus (Mouse)).